The sequence spans 109 residues: uncharacterized protein (109 aa).

This is an uncharacterized protein from Autographa californica nuclear polyhedrosis virus (AcMNPV).